Consider the following 144-residue polypeptide: 3-dehydroquinate dehydratase (144 aa).

Tyrosine 24 serves as the catalytic Proton acceptor. Substrate contacts are provided by asparagine 76, histidine 82, and aspartate 89. Histidine 102 functions as the Proton donor in the catalytic mechanism. Residues 103-104 (LS) and arginine 113 contribute to the substrate site.

The protein belongs to the type-II 3-dehydroquinase family. In terms of assembly, homododecamer.

It carries out the reaction 3-dehydroquinate = 3-dehydroshikimate + H2O. Its pathway is metabolic intermediate biosynthesis; chorismate biosynthesis; chorismate from D-erythrose 4-phosphate and phosphoenolpyruvate: step 3/7. In terms of biological role, catalyzes a trans-dehydration via an enolate intermediate. The chain is 3-dehydroquinate dehydratase from Nitrosomonas europaea (strain ATCC 19718 / CIP 103999 / KCTC 2705 / NBRC 14298).